The following is a 231-amino-acid chain: Large ribosomal subunit protein uL1 (231 aa).

The protein belongs to the universal ribosomal protein uL1 family. In terms of assembly, part of the 50S ribosomal subunit.

Functionally, binds directly to 23S rRNA. The L1 stalk is quite mobile in the ribosome, and is involved in E site tRNA release. Its function is as follows. Protein L1 is also a translational repressor protein, it controls the translation of the L11 operon by binding to its mRNA. The sequence is that of Large ribosomal subunit protein uL1 from Moorella thermoacetica (strain ATCC 39073 / JCM 9320).